The primary structure comprises 421 residues: uncharacterized protein (421 aa).

This is an uncharacterized protein from Escherichia coli (strain K12).